The sequence spans 612 residues: Proline-rich protein 14 (612 aa).

N-acetylmethionine is present on methionine 1. 2 stretches are compositionally biased toward polar residues: residues 1–15 (MDLP…QPSL) and 86–96 (VCTQSPALPSQ). Disordered regions lie at residues 1-48 (MDLP…EKAS), 65-96 (VPLT…LPSQ), 119-150 (RARQ…QVPQ), and 206-256 (PTLT…PALE). Residues 1 to 135 (MDLPGNSSPF…ALRMRSRAAS (135 aa)) are sufficient for heterochromatin association in interphase and chromatin association in anaphase. The interval 85-405 (PVCTQSPALP…MARTPPPPRP (321 aa)) is required for the interaction with GRB2 and sufficient to promote the phosphorylation of AKT and cell proliferation. The segment at 136–392 (GPEESPSKKT…QSRPRRHTVG (257 aa)) is required for nuclear lamina association. Residues 243 to 252 (ADPPESPVPD) are compositionally biased toward pro residues. Serine 307 carries the post-translational modification Phosphoserine. Disordered regions lie at residues 323 to 405 (QSRA…PPRP), 444 to 463 (LGST…FSDP), and 553 to 583 (DSSL…PSQD). The segment covering 342–359 (WRTQCNSLAPVSKSSLGR) has biased composition (polar residues). Residues 366–379 (LGPPDPGSWPPVPS) are compositionally biased toward pro residues. The segment covering 448–463 (KGKELRASKDKVFSDP) has biased composition (basic and acidic residues). Residues 546 to 563 (RRAVEFRDSSLPRSRRPS) are required for nuclear localization. The span at 570 to 583 (ASRTLTPNLAPSQD) shows a compositional bias: polar residues.

In terms of assembly, interacts (via proline-rich region) with GRB2 (via SH3 domain 2). Interacts (via N-terminus) with CBX5.

It is found in the chromosome. The protein localises to the nucleus. The protein resides in the nucleus lamina. Its subcellular location is the nucleoplasm. Functions in tethering peripheral heterochromatin to the nuclear lamina during interphase, possibly through the interaction with heterochromatin protein CBX5/HP1 alpha. Might play a role in reattaching heterochromatin to the nuclear lamina at mitotic exit. Promotes myoblast differentiation during skeletal myogenesis, possibly by stimulating transcription factor MyoD activity via binding to CBX5/HP1 alpha. Involved in the positive regulation of the PI3K-Akt-mTOR signaling pathway and in promoting cell proliferation, possibly via binding to GRB2. The chain is Proline-rich protein 14 (Prr14) from Mus musculus (Mouse).